The sequence spans 271 residues: Formamidopyrimidine-DNA glycosylase (271 aa).

Proline 2 acts as the Schiff-base intermediate with DNA in catalysis. Glutamate 3 (proton donor) is an active-site residue. Lysine 56 acts as the Proton donor; for beta-elimination activity in catalysis. DNA-binding residues include histidine 89, arginine 107, and lysine 151. The FPG-type zinc-finger motif lies at 236–270 (NVYGRAGLPCRQCGTPVRLLRQGQRSTYFCPHCQR). The active-site Proton donor; for delta-elimination activity is the arginine 260.

The protein belongs to the FPG family. In terms of assembly, monomer. It depends on Zn(2+) as a cofactor.

The catalysed reaction is Hydrolysis of DNA containing ring-opened 7-methylguanine residues, releasing 2,6-diamino-4-hydroxy-5-(N-methyl)formamidopyrimidine.. The enzyme catalyses 2'-deoxyribonucleotide-(2'-deoxyribose 5'-phosphate)-2'-deoxyribonucleotide-DNA = a 3'-end 2'-deoxyribonucleotide-(2,3-dehydro-2,3-deoxyribose 5'-phosphate)-DNA + a 5'-end 5'-phospho-2'-deoxyribonucleoside-DNA + H(+). Its function is as follows. Involved in base excision repair of DNA damaged by oxidation or by mutagenic agents. Acts as a DNA glycosylase that recognizes and removes damaged bases. Has a preference for oxidized purines, such as 7,8-dihydro-8-oxoguanine (8-oxoG). Has AP (apurinic/apyrimidinic) lyase activity and introduces nicks in the DNA strand. Cleaves the DNA backbone by beta-delta elimination to generate a single-strand break at the site of the removed base with both 3'- and 5'-phosphates. The sequence is that of Formamidopyrimidine-DNA glycosylase from Acidovorax sp. (strain JS42).